We begin with the raw amino-acid sequence, 950 residues long: Bifunctional glutamine synthetase adenylyltransferase/adenylyl-removing enzyme (950 aa).

An adenylyl removase region spans residues 1 to 443; that stretch reads MSLPSPLIPV…VFVTLIGDEE (443 aa). The adenylyl transferase stretch occupies residues 450 to 950; the sequence is ERHFNELWDM…WQEWLESSTI (501 aa).

The protein belongs to the GlnE family. Mg(2+) is required as a cofactor.

It carries out the reaction [glutamine synthetase]-O(4)-(5'-adenylyl)-L-tyrosine + phosphate = [glutamine synthetase]-L-tyrosine + ADP. The enzyme catalyses [glutamine synthetase]-L-tyrosine + ATP = [glutamine synthetase]-O(4)-(5'-adenylyl)-L-tyrosine + diphosphate. In terms of biological role, involved in the regulation of glutamine synthetase GlnA, a key enzyme in the process to assimilate ammonia. When cellular nitrogen levels are high, the C-terminal adenylyl transferase (AT) inactivates GlnA by covalent transfer of an adenylyl group from ATP to specific tyrosine residue of GlnA, thus reducing its activity. Conversely, when nitrogen levels are low, the N-terminal adenylyl removase (AR) activates GlnA by removing the adenylyl group by phosphorolysis, increasing its activity. The regulatory region of GlnE binds the signal transduction protein PII (GlnB) which indicates the nitrogen status of the cell. In Vibrio vulnificus (strain CMCP6), this protein is Bifunctional glutamine synthetase adenylyltransferase/adenylyl-removing enzyme.